Consider the following 85-residue polypeptide: Cytochrome c6 (85 aa).

Heme c-binding residues include Cys14, Cys17, His18, and Met58.

It belongs to the cytochrome c family. PetJ subfamily. In terms of assembly, monomer. Binds 1 heme c group covalently per subunit.

It localises to the cellular thylakoid lumen. Functionally, functions as an electron carrier between membrane-bound cytochrome b6-f and photosystem I in oxygenic photosynthesis. The protein is Cytochrome c6 (petJ) of Leptolyngbya boryana (Plectonema boryanum).